Reading from the N-terminus, the 577-residue chain is Leucine-rich repeat protein soc-2 homolog (577 aa).

Basic and acidic residues-rich tracts occupy residues 1-10 (MRRTKGRTDS) and 33-48 (STAH…EAKK). A disordered region spans residues 1–71 (MRRTKGRTDS…PTVKKRSTPS (71 aa)). LRR repeat units lie at residues 87-109 (GATR…KELT), 110-131 (SLRE…VGLL), 133-155 (NLET…VKLT), 156-177 (KLKV…IYKL), 179-201 (TLTT…GNLK), 202-223 (LLER…IGQL), 225-246 (HLVT…IGNC), 248-269 (HMTS…IGRL), 271-292 (AMTR…LANC), 294-315 (GIDE…LLSS), 318-339 (NLTS…PPKQ), 342-363 (QVNT…VFNK), 366-387 (YLSK…FGSW), 389-410 (SLVE…IQWL), 412-434 (NLEV…GALR), 435-456 (KLRV…IEYL), 458-479 (SLER…IGYL), 481-502 (SVTY…IGNM), 504-526 (SLEQ…LVLC), and 528-549 (SLQI…IVAG).

The protein belongs to the SHOC2 family.

In terms of biological role, acts as a Ras effector and participates in MAPK pathway activation. Probably acts as a scaffolding protein in a protein phosphatase complex that specifically dephosphorylates Raf kinase and stimulate Raf activity at specialized signaling complexes upon Ras activation. In Nematostella vectensis (Starlet sea anemone), this protein is Leucine-rich repeat protein soc-2 homolog.